The chain runs to 1062 residues: Translation initiation factor IF-2 (1062 aa).

The disordered stretch occupies residues 34-463 (SASSTVEAPV…RMGAMVPRGN (430 aa)). Residues 76 to 121 (PTPPSRPGLAPRPGPRPVPGRPGPLGRPGPATPAPSPSPASPPLPA) are compositionally biased toward pro residues. Over residues 122 to 153 (SPVQASPVQASPVQASPTSAPAAPRPAAASAV) the composition is skewed to low complexity. Residues 154–178 (PAPPMPSVPSAPSGPRPGPNAPRPG) are compositionally biased toward pro residues. Over residues 198–214 (TAGGPTAGGPTAGGPTA) the composition is skewed to gly residues. Positions 294 to 305 (RPTPGGMPPRPG) are enriched in pro residues. 2 stretches are compositionally biased toward gly residues: residues 307–324 (PRSGAGGGMPPRPGGTGG) and 344–430 (PGGG…GGRG). Positions 431–442 (RPGRQRKSKRAK) are enriched in basic residues. The tr-type G domain maps to 555–727 (SRPPVVTVMG…IVLTADASLD (173 aa)). The G1 stretch occupies residues 564 to 571 (GHVDHGKT). 564 to 571 (GHVDHGKT) is a binding site for GTP. The segment at 589-593 (GITQH) is G2. The segment at 614 to 617 (DTPG) is G3. GTP is bound by residues 614-618 (DTPGH) and 668-671 (NKVD). Positions 668-671 (NKVD) are G4. The interval 704–706 (SAR) is G5.

This sequence belongs to the TRAFAC class translation factor GTPase superfamily. Classic translation factor GTPase family. IF-2 subfamily.

It localises to the cytoplasm. One of the essential components for the initiation of protein synthesis. Protects formylmethionyl-tRNA from spontaneous hydrolysis and promotes its binding to the 30S ribosomal subunits. Also involved in the hydrolysis of GTP during the formation of the 70S ribosomal complex. This chain is Translation initiation factor IF-2, found in Frankia casuarinae (strain DSM 45818 / CECT 9043 / HFP020203 / CcI3).